The sequence spans 216 residues: MASKEELLQELSDAIVSCKKDRVIAAVEKAKEVMEPAEIIEKGLAAGMNQVGTLFERGKLFLPHVMMAADSMTAGVNILEAEMPAGTETKKLGVIVNGTVEGDVHDIGKSIVSTMLQSAGFEVHDIGRDVPIKNFVEKAKEVNADMIGLSALMTTTMQGQRDVIELLKEEGMRERVKVMVGGAPATQAWADKIGADCYAENASEAVAKAKELLLGK.

The 91-residue stretch at 1-91 (MASKEELLQE…EMPAGTETKK (91 aa)) folds into the B12-binding N-terminal domain. In terms of domain architecture, B12-binding spans 92–216 (LGVIVNGTVE…AKAKELLLGK (125 aa)). Position 105 (H105) interacts with methylcob(III)alamin.

The protein belongs to the methylamine corrinoid protein family.

Its pathway is one-carbon metabolism; methanogenesis from dimethylamine. In terms of biological role, acts as a methyl group carrier between MtbB and MtbA. This Methanosarcina acetivorans (strain ATCC 35395 / DSM 2834 / JCM 12185 / C2A) protein is Dimethylamine corrinoid protein 2 (mtbC2).